The primary structure comprises 194 residues: Holliday junction branch migration complex subunit RuvA (194 aa).

Positions 1 to 64 (MIGRLRGILA…EDSVSLYGFL (64 aa)) are domain I. The interval 65 to 140 (REGERRLFRD…RAADFSSGAP (76 aa)) is domain II. The segment at 140–144 (PITGQ) is flexible linker. A domain III region spans residues 145–194 (LGPDAVSEATVALQQLGYKPAEAARMAREAGAEGDEVATVIRKALQAALR).

The protein belongs to the RuvA family. As to quaternary structure, homotetramer. Forms an RuvA(8)-RuvB(12)-Holliday junction (HJ) complex. HJ DNA is sandwiched between 2 RuvA tetramers; dsDNA enters through RuvA and exits via RuvB. An RuvB hexamer assembles on each DNA strand where it exits the tetramer. Each RuvB hexamer is contacted by two RuvA subunits (via domain III) on 2 adjacent RuvB subunits; this complex drives branch migration. In the full resolvosome a probable DNA-RuvA(4)-RuvB(12)-RuvC(2) complex forms which resolves the HJ.

The protein localises to the cytoplasm. Functionally, the RuvA-RuvB-RuvC complex processes Holliday junction (HJ) DNA during genetic recombination and DNA repair, while the RuvA-RuvB complex plays an important role in the rescue of blocked DNA replication forks via replication fork reversal (RFR). RuvA specifically binds to HJ cruciform DNA, conferring on it an open structure. The RuvB hexamer acts as an ATP-dependent pump, pulling dsDNA into and through the RuvAB complex. HJ branch migration allows RuvC to scan DNA until it finds its consensus sequence, where it cleaves and resolves the cruciform DNA. In Xanthomonas campestris pv. campestris (strain 8004), this protein is Holliday junction branch migration complex subunit RuvA.